The chain runs to 379 residues: Succinyl-diaminopimelate desuccinylase (379 aa).

His70 is a binding site for Zn(2+). Residue Asp72 is part of the active site. Zn(2+) is bound at residue Asp103. Glu137 (proton acceptor) is an active-site residue. The Zn(2+) site is built by Glu138, Glu166, and His352.

Belongs to the peptidase M20A family. DapE subfamily. As to quaternary structure, homodimer. The cofactor is Zn(2+). Co(2+) is required as a cofactor.

The catalysed reaction is N-succinyl-(2S,6S)-2,6-diaminopimelate + H2O = (2S,6S)-2,6-diaminopimelate + succinate. Its pathway is amino-acid biosynthesis; L-lysine biosynthesis via DAP pathway; LL-2,6-diaminopimelate from (S)-tetrahydrodipicolinate (succinylase route): step 3/3. Catalyzes the hydrolysis of N-succinyl-L,L-diaminopimelic acid (SDAP), forming succinate and LL-2,6-diaminopimelate (DAP), an intermediate involved in the bacterial biosynthesis of lysine and meso-diaminopimelic acid, an essential component of bacterial cell walls. This chain is Succinyl-diaminopimelate desuccinylase, found in Burkholderia mallei (strain NCTC 10247).